Here is a 632-residue protein sequence, read N- to C-terminus: MSGGSRIQLLSPRLANQIAAGEVVERPASVAKELLENSLDSGARRIEVEVEQGGVKLLRVRDNGGGIAPDDLPLALARHATSKIRELEDLEGVLSLGFRGEALASISSVARLTLTSRTADAGEAWQVETEGRDMTPRVQPAAHPVGTSVEVRDLFFNTPARRKFLKAEKTEFDHLQEVIRRLALARFDVGFHLRHNGKTIFSLHEATDEMARARRVGTICGPGFLEQALPIDVERNGLRLWGWVGLPTFSRSQADLQYFFVNGRAVRDKLVAHAVRQAYRDVLFNGRHPTFVLFLECDPTGVDVNVHPTKHEVRFREGRMVHDFLYGTLHRALADVRPEDQLAAPAAASEIVRPSGQQVGEFGPQGEMRLASPVLEQPQAEPRQSFTPGSGAGSGYQYQYTPRPSQPLPVAETQAVYREFYAPLDGTAPASLPESQGDIPPLGYALAQLKGIYILAENAVGLVLVDMHAAHERIMYERLKVAMASEGLSGQPLLVPESLALSQREADCAEEHAQWFQRLGFELQRLGPETVAIRQIPALLKQAEANRLVQDVLADLMEYGTSDRIQAHLNELLGTMACHGAVRANRRLAIPEMNALLRDMENTERSGQCNHGRPTWTQMGLDDLDKLFLRGR.

The tract at residues 376–397 (EQPQAEPRQSFTPGSGAGSGYQ) is disordered.

This sequence belongs to the DNA mismatch repair MutL/HexB family.

Its function is as follows. This protein is involved in the repair of mismatches in DNA. It is required for dam-dependent methyl-directed DNA mismatch repair. May act as a 'molecular matchmaker', a protein that promotes the formation of a stable complex between two or more DNA-binding proteins in an ATP-dependent manner without itself being part of a final effector complex. The chain is DNA mismatch repair protein MutL from Pseudomonas entomophila (strain L48).